A 552-amino-acid chain; its full sequence is T-box transcription factor TBX4 (552 aa).

A compositionally biased stretch (basic and acidic residues) spans 1–14 (MLQDKGLSESEEAF). Residues 1-50 (MLQDKGLSESEEAFRAPGPALGEASNTSTTNAPEPALATPGLSGAALSSP) are disordered. Positions 76–256 (LHEKELWKKF…NNPFAKGFRG (181 aa)) form a DNA-binding region, T-box. S514 is modified (phosphoserine).

Its subcellular location is the nucleus. Transcriptional regulator that has an essential role in the organogenesis of lungs, pelvis, and hindlimbs. The chain is T-box transcription factor TBX4 (Tbx4) from Mus musculus (Mouse).